Reading from the N-terminus, the 79-residue chain is Small ribosomal subunit protein bS18 (79 aa).

Part of the 30S ribosomal subunit. Forms a tight heterodimer with protein bS6. Both N-terminus methionine truncation and retention have been observed for this protein. Post-translationally, may be methylated up to 6 times, on undetermined residues.

Binds as a heterodimer with protein bS6 to the central domain of the 16S rRNA, where it helps stabilize the platform of the 30S subunit. The protein is Small ribosomal subunit protein bS18 of Rhodopseudomonas palustris (strain ATCC BAA-98 / CGA009).